Here is a 158-residue protein sequence, read N- to C-terminus: Large ribosomal subunit protein uL16 (158 aa).

Belongs to the universal ribosomal protein uL16 family. In terms of assembly, part of the 50S ribosomal subunit.

In terms of biological role, binds 23S rRNA and is also seen to make contacts with the A and possibly P site tRNAs. In Synechococcus sp. (strain CC9902), this protein is Large ribosomal subunit protein uL16.